We begin with the raw amino-acid sequence, 155 residues long: SsrA-binding protein (155 aa).

The protein belongs to the SmpB family.

The protein resides in the cytoplasm. Functionally, required for rescue of stalled ribosomes mediated by trans-translation. Binds to transfer-messenger RNA (tmRNA), required for stable association of tmRNA with ribosomes. tmRNA and SmpB together mimic tRNA shape, replacing the anticodon stem-loop with SmpB. tmRNA is encoded by the ssrA gene; the 2 termini fold to resemble tRNA(Ala) and it encodes a 'tag peptide', a short internal open reading frame. During trans-translation Ala-aminoacylated tmRNA acts like a tRNA, entering the A-site of stalled ribosomes, displacing the stalled mRNA. The ribosome then switches to translate the ORF on the tmRNA; the nascent peptide is terminated with the 'tag peptide' encoded by the tmRNA and targeted for degradation. The ribosome is freed to recommence translation, which seems to be the essential function of trans-translation. This Lawsonia intracellularis (strain PHE/MN1-00) protein is SsrA-binding protein.